Here is a 485-residue protein sequence, read N- to C-terminus: Glutamyl-tRNA(Gln) amidotransferase subunit A (485 aa).

Catalysis depends on charge relay system residues K78 and S153. S177 (acyl-ester intermediate) is an active-site residue.

Belongs to the amidase family. GatA subfamily. Heterotrimer of A, B and C subunits.

The enzyme catalyses L-glutamyl-tRNA(Gln) + L-glutamine + ATP + H2O = L-glutaminyl-tRNA(Gln) + L-glutamate + ADP + phosphate + H(+). Allows the formation of correctly charged Gln-tRNA(Gln) through the transamidation of misacylated Glu-tRNA(Gln) in organisms which lack glutaminyl-tRNA synthetase. The reaction takes place in the presence of glutamine and ATP through an activated gamma-phospho-Glu-tRNA(Gln). This Bacillus cereus (strain 03BB102) protein is Glutamyl-tRNA(Gln) amidotransferase subunit A.